The chain runs to 229 residues: Ribonuclease 3 (229 aa).

One can recognise an RNase III domain in the interval 4–133; that stretch reads WEELQESVGF…FIGALYLDNG (130 aa). Glu-46 serves as a coordination point for Mg(2+). Asp-50 is an active-site residue. Mg(2+) contacts are provided by Asp-119 and Glu-122. Glu-122 is an active-site residue. Residues 159-228 enclose the DRBM domain; the sequence is DYKTQLQEIV…AQFAINQLTH (70 aa).

The protein belongs to the ribonuclease III family. In terms of assembly, homodimer. It depends on Mg(2+) as a cofactor.

Its subcellular location is the cytoplasm. The catalysed reaction is Endonucleolytic cleavage to 5'-phosphomonoester.. Digests double-stranded RNA. Involved in the processing of primary rRNA transcript to yield the immediate precursors to the large and small rRNAs (23S and 16S). Processes some mRNAs, and tRNAs when they are encoded in the rRNA operon. Processes pre-crRNA and tracrRNA of type II CRISPR loci if present in the organism. The protein is Ribonuclease 3 of Listeria welshimeri serovar 6b (strain ATCC 35897 / DSM 20650 / CCUG 15529 / CIP 8149 / NCTC 11857 / SLCC 5334 / V8).